A 366-amino-acid chain; its full sequence is Alanine racemase (366 aa).

Lysine 40 (proton acceptor; specific for D-alanine) is an active-site residue. Lysine 40 is subject to N6-(pyridoxal phosphate)lysine. Arginine 136 lines the substrate pocket. Catalysis depends on tyrosine 263, which acts as the Proton acceptor; specific for L-alanine. Residue methionine 310 participates in substrate binding.

Belongs to the alanine racemase family. The cofactor is pyridoxal 5'-phosphate.

It catalyses the reaction L-alanine = D-alanine. It participates in amino-acid biosynthesis; D-alanine biosynthesis; D-alanine from L-alanine: step 1/1. Its function is as follows. Catalyzes the interconversion of L-alanine and D-alanine. May also act on other amino acids. The polypeptide is Alanine racemase (alr) (Streptococcus agalactiae serotype Ia (strain ATCC 27591 / A909 / CDC SS700)).